The chain runs to 304 residues: Chromo domain-containing protein cec-1 (304 aa).

The region spanning 8–66 (YTVESILEHRKKKGKSEFYIKWLGYDHTHNSWEPKENIVDPTLIEAFFTREAARKAEIK) is the Chromo domain. Basic and acidic residues predominate over residues 63–73 (AEIKAKKDKMA). Disordered regions lie at residues 63–235 (AEIK…EIQL) and 248–304 (VEPA…AIIE). Low complexity predominate over residues 75–102 (GKKGASSKASASVSKASASTPARGAKAA). A compositionally biased stretch (basic residues) spans 106 to 116 (PPKKSPPKRQR). Basic and acidic residues predominate over residues 122-141 (IRPDSDTDEEHSSADKKSKA). 3 stretches are compositionally biased toward acidic residues: residues 142–152 (EDEEEVEDDEE), 163–204 (EEPE…DVQL), and 212–233 (EEEEEKVEEKKEEEEEEEEEEI). The segment covering 248-292 (VEPAVATPEPSEPSSSEKAVVENGSSSAAAGNSASKPEVSAVEVV) has biased composition (low complexity). Residues 293-304 (TVEDDDDIAIIE) show a composition bias toward acidic residues.

It is found in the nucleus. It localises to the chromosome. This chain is Chromo domain-containing protein cec-1 (cec-1), found in Caenorhabditis elegans.